The chain runs to 557 residues: MALSTLNREVIKKNLQNEEYDVVIIGGGITGAGIALDASQRGMKVALVEMQDFAQGTSSRSTKLVHGGLRYLKQAQIKVVAETGKERAIVYENGPHVTTPEWMLLPMHKGGTFGKFTTNLGLTAYDRLAGVKKYERKKMLSKKQTLNKEPLVKKDGLKGGGYYVEYRTDDARLTIEVMKRAEENGAEILNHTKSTDFIYDSKSKVRGIEVQDLLTGEMYEINAKKVINAAGPWVDEVRKKDYTRNNKQLRLTKGVHVVIDQSKFPLRQAVYFDTEKDGRMIFAIPREGKAYVGTTDTFYDNDKTKPLTTQEDRDYLIDAINYMFPDVNVKDEDIESTWAGVRPLILEDGKDPSEISRKDEIWEGKSGLLTIAGGKLTGYRHMALEIVDLLAKRLKQEYKLTFAECKTKHTPISGGDVGGSANFESFVERKVEEGKAIGLQADVAKRLASKYGSNVDKLYNIAQIAQDKDLKLPLELYVELVYSVQNEMVFKPTDFLIRRSGKLYFNINEVKQYKDAVVEELAKLLNYTQSQQNEFTKEINIAIEEATRGNEQLAVLK.

Position 21–49 (21–49 (DVVIIGGGITGAGIALDASQRGMKVALVE)) interacts with FAD.

Belongs to the FAD-dependent glycerol-3-phosphate dehydrogenase family. FAD is required as a cofactor.

It is found in the cytoplasm. It carries out the reaction a quinone + sn-glycerol 3-phosphate = dihydroxyacetone phosphate + a quinol. It participates in polyol metabolism; glycerol degradation via glycerol kinase pathway; glycerone phosphate from sn-glycerol 3-phosphate (aerobic route): step 1/1. This Staphylococcus haemolyticus (strain JCSC1435) protein is Aerobic glycerol-3-phosphate dehydrogenase (glpD).